The sequence spans 290 residues: Fructose-1,6-bisphosphatase class 1 (290 aa).

Mg(2+)-binding residues include glutamate 78, aspartate 96, leucine 98, and aspartate 99. Residues 99 to 102 (DGSS), tyrosine 201, and lysine 226 each bind substrate. Glutamate 232 provides a ligand contact to Mg(2+).

This sequence belongs to the FBPase class 1 family. As to quaternary structure, homotetramer. The cofactor is Mg(2+).

It is found in the cytoplasm. It carries out the reaction beta-D-fructose 1,6-bisphosphate + H2O = beta-D-fructose 6-phosphate + phosphate. Its pathway is carbohydrate biosynthesis; gluconeogenesis. The protein is Fructose-1,6-bisphosphatase class 1 of Helicobacter acinonychis (strain Sheeba).